The chain runs to 161 residues: Protein ilm1 (161 aa).

Topologically, residues 1–6 are cytoplasmic; it reads MLFSFR. Residues 7–27 traverse the membrane as a helical segment; sequence AIVLFYCCMLTFAGIGFLWNP. Over 28–56 the chain is Lumenal; that stretch reads KFVVESGLVALIGASMEVKPLIVTQDNLS. The chain crosses the membrane as a helical span at residues 57 to 77; the sequence is TLALSGLVFLILGMIYTISLL. Residues 78 to 81 lie on the Cytoplasmic side of the membrane; the sequence is QSNF. Residues 82–102 traverse the membrane as a helical segment; it reads LFFSGITPIRAIFDFILTGFI. The Lumenal segment spans residues 103–112; the sequence is YLKKEHIASN. Residues 113–133 traverse the membrane as a helical segment; it reads SLTFTFAFCDLMWQFWMFAAM. At 134–161 the chain is on the cytoplasmic side; sequence SEERAKYLKNQKKAEELAARKAREVEES.

This sequence belongs to the ILM1 family.

It is found in the endoplasmic reticulum. Its subcellular location is the membrane. The protein is Protein ilm1 of Schizosaccharomyces pombe (strain 972 / ATCC 24843) (Fission yeast).